A 222-amino-acid polypeptide reads, in one-letter code: Cytidylate kinase (222 aa).

Position 11–19 (11–19 (GPAGAGKST)) interacts with ATP.

The protein belongs to the cytidylate kinase family. Type 1 subfamily.

The protein resides in the cytoplasm. The enzyme catalyses CMP + ATP = CDP + ADP. The catalysed reaction is dCMP + ATP = dCDP + ADP. The sequence is that of Cytidylate kinase from Desulforamulus reducens (strain ATCC BAA-1160 / DSM 100696 / MI-1) (Desulfotomaculum reducens).